A 261-amino-acid polypeptide reads, in one-letter code: Ribosome-inactivating protein PD-L3/PD-L4 (261 aa).

A glycan (N-linked (GlcNAc...) asparagine; in PD-L3) is linked at Asn10. 2 cysteine pairs are disulfide-bonded: Cys34–Cys258 and Cys84–Cys105. Glu175 is a catalytic residue.

The protein belongs to the ribosome-inactivating protein family. Type 1 RIP subfamily.

The catalysed reaction is Endohydrolysis of the N-glycosidic bond at one specific adenosine on the 28S rRNA.. Inhibits protein synthesis. Does not cleave supercoiled pBR322 dsDNA. The polypeptide is Ribosome-inactivating protein PD-L3/PD-L4 (Phytolacca dioica (Bella sombra tree)).